Consider the following 63-residue polypeptide: Large ribosomal subunit protein uL29 (63 aa).

This sequence belongs to the universal ribosomal protein uL29 family.

This chain is Large ribosomal subunit protein uL29, found in Sodalis glossinidius (strain morsitans).